The sequence spans 304 residues: Nod factor export ATP-binding protein I (304 aa).

The region spanning Ile-6–Tyr-236 is the ABC transporter domain. Gly-38–Thr-45 lines the ATP pocket.

Belongs to the ABC transporter superfamily. Lipooligosaccharide exporter (TC 3.A.1.102) family. The complex is composed of two ATP-binding proteins (NodI) and two transmembrane proteins (NodJ).

Its subcellular location is the cell inner membrane. Part of the ABC transporter complex NodIJ involved in the export of the nodulation factors (Nod factors), the bacterial signal molecules that induce symbiosis and subsequent nodulation induction. Nod factors are LCO (lipo-chitin oligosaccharide), a modified beta-1,4-linked N-acetylglucosamine oligosaccharide. This subunit is responsible for energy coupling to the transport system. The polypeptide is Nod factor export ATP-binding protein I (Burkholderia orbicola (strain AU 1054)).